Reading from the N-terminus, the 141-residue chain is Hemoglobin subunit alpha-1/2 (141 aa).

The Globin domain occupies 1-141 (VLSPADKANV…VGTVLTSKYR (141 aa)). Ser-3 carries the phosphoserine modification. N6-succinyllysine is present on residues Lys-7 and Lys-11. Residue Lys-16 is modified to N6-acetyllysine; alternate. N6-succinyllysine; alternate is present on Lys-16. Tyr-24 bears the Phosphotyrosine mark. Phosphoserine is present on Ser-35. The residue at position 40 (Lys-40) is an N6-succinyllysine. Ser-49 is subject to Phosphoserine. O2 is bound at residue His-58. A heme b-binding site is contributed by His-87. Residue Ser-102 is modified to Phosphoserine. The residue at position 108 (Thr-108) is a Phosphothreonine. 2 positions are modified to phosphoserine: Ser-124 and Ser-131. A phosphothreonine mark is found at Thr-134 and Thr-137. Phosphoserine is present on Ser-138.

Belongs to the globin family. Heterotetramer of two alpha chains and two beta chains. As to expression, red blood cells.

Involved in oxygen transport from the lung to the various peripheral tissues. In Macroderma gigas (Australian ghost bat), this protein is Hemoglobin subunit alpha-1/2.